A 176-amino-acid chain; its full sequence is Ribosome maturation factor RimM (176 aa).

One can recognise a PRC barrel domain in the interval 100–173 (EGEFHLLDLV…WLRLTPPPGL (74 aa)).

The protein belongs to the RimM family. Binds ribosomal protein uS19.

The protein resides in the cytoplasm. Functionally, an accessory protein needed during the final step in the assembly of 30S ribosomal subunit, possibly for assembly of the head region. Essential for efficient processing of 16S rRNA. May be needed both before and after RbfA during the maturation of 16S rRNA. It has affinity for free ribosomal 30S subunits but not for 70S ribosomes. The protein is Ribosome maturation factor RimM of Prochlorococcus marinus (strain MIT 9303).